A 360-amino-acid chain; its full sequence is 3-dehydroquinate synthase (360 aa).

NAD(+) contacts are provided by residues 71–76 (DGEQFK), 105–109 (GVIGD), 129–130 (TT), K142, K151, and 169–172 (FLKT). Zn(2+) is bound by residues E184, H247, and H264.

Belongs to the sugar phosphate cyclases superfamily. Dehydroquinate synthase family. The cofactor is NAD(+). Co(2+) is required as a cofactor. Zn(2+) serves as cofactor.

Its subcellular location is the cytoplasm. It catalyses the reaction 7-phospho-2-dehydro-3-deoxy-D-arabino-heptonate = 3-dehydroquinate + phosphate. The protein operates within metabolic intermediate biosynthesis; chorismate biosynthesis; chorismate from D-erythrose 4-phosphate and phosphoenolpyruvate: step 2/7. Its function is as follows. Catalyzes the conversion of 3-deoxy-D-arabino-heptulosonate 7-phosphate (DAHP) to dehydroquinate (DHQ). The sequence is that of 3-dehydroquinate synthase from Buchnera aphidicola subsp. Schizaphis graminum (strain Sg).